A 616-amino-acid polypeptide reads, in one-letter code: Chaperone protein HscA (616 aa).

Belongs to the heat shock protein 70 family.

In terms of biological role, chaperone involved in the maturation of iron-sulfur cluster-containing proteins. Has a low intrinsic ATPase activity which is markedly stimulated by HscB. Involved in the maturation of IscU. This is Chaperone protein HscA from Escherichia coli O7:K1 (strain IAI39 / ExPEC).